A 142-amino-acid chain; its full sequence is C-type lectin 13 (142 aa).

The N-terminal stretch at 1-23 (MGRLVFVSFGGWDVFLSLSGTGA) is a signal peptide. 3 disulfide bridges follow: Cys25–Cys36, Cys53–Cys138, and Cys115–Cys130. Residues 32–139 (YEGHCYRVFQ…CSKTHNVVCK (108 aa)) enclose the C-type lectin domain.

It belongs to the snaclec family. As to quaternary structure, heteromultimer; disulfide-linked. As to expression, expressed by the venom gland.

It localises to the secreted. Interferes with one step of hemostasis (modulation of platelet aggregation, or coagulation cascade, for example). The sequence is that of C-type lectin 13 from Crotalus adamanteus (Eastern diamondback rattlesnake).